The following is a 323-amino-acid chain: MPSLPPAIFLMGPTAAGKTDLAMALADALPCELISVDSALIYRGMDIGTAKPSRELLARYPHRLIDIRDPAESYSAAEFRADALAAMAEATARGRIPLLVGGTMLYYKALLEGLADMPGADPEVRAALEAEARAEGWEALHRQLAEVDPESAARIHPNDPQRLMRALEVYRVGGVSMSELRRRQSAEKADFDASGRNQLPYTVAQLAIAPEQRQVLHARIAQRFRQMLEQGFIAEVEALHARSDLHAGLPSIRAVGYRQVWDYLDGKLSYAEMTERGIIATRQLAKRQFTWLRSWSHLHWMDSLAGDNLPRALKYLKTVSILA.

12–19 (GPTAAGKT) contributes to the ATP binding site. Residue 14–19 (TAAGKT) coordinates substrate. Interaction with substrate tRNA stretches follow at residues 37 to 40 (DSAL) and 161 to 165 (QRLMR).

The protein belongs to the IPP transferase family. As to quaternary structure, monomer. The cofactor is Mg(2+).

The enzyme catalyses adenosine(37) in tRNA + dimethylallyl diphosphate = N(6)-dimethylallyladenosine(37) in tRNA + diphosphate. Catalyzes the transfer of a dimethylallyl group onto the adenine at position 37 in tRNAs that read codons beginning with uridine, leading to the formation of N6-(dimethylallyl)adenosine (i(6)A). The polypeptide is tRNA dimethylallyltransferase (Pseudomonas paraeruginosa (strain DSM 24068 / PA7) (Pseudomonas aeruginosa (strain PA7))).